Reading from the N-terminus, the 72-residue chain is Putative membrane protein insertion efficiency factor (72 aa).

The protein belongs to the UPF0161 family.

The protein resides in the cell inner membrane. Its function is as follows. Could be involved in insertion of integral membrane proteins into the membrane. In Trichodesmium erythraeum (strain IMS101), this protein is Putative membrane protein insertion efficiency factor.